A 394-amino-acid chain; its full sequence is Elongation factor Tu 1 (394 aa).

The tr-type G domain maps to 9–204 (KPHCNIGTIG…AIDDYIPQPT (196 aa)). The G1 stretch occupies residues 18–25 (GHVDHGKT). Residue 18–25 (GHVDHGKT) coordinates GTP. Threonine 25 provides a ligand contact to Mg(2+). The G2 stretch occupies residues 61–65 (GITIQ). Positions 82 to 85 (DCPG) are G3. Residues 82 to 86 (DCPGH) and 137 to 140 (NKID) each bind GTP. The segment at 137–140 (NKID) is G4. A G5 region spans residues 174-176 (SAL).

It belongs to the TRAFAC class translation factor GTPase superfamily. Classic translation factor GTPase family. EF-Tu/EF-1A subfamily. As to quaternary structure, monomer.

Its subcellular location is the cytoplasm. The catalysed reaction is GTP + H2O = GDP + phosphate + H(+). Its function is as follows. GTP hydrolase that promotes the GTP-dependent binding of aminoacyl-tRNA to the A-site of ribosomes during protein biosynthesis. The chain is Elongation factor Tu 1 from Orientia tsutsugamushi (strain Boryong) (Rickettsia tsutsugamushi).